Here is a 262-residue protein sequence, read N- to C-terminus: MENSFKAALKAGRPQIGLWLGLSSSYSAELLAGAGFDWLLIDGEHAPNNVQTVLTQLQAIAPYPSQPVVRPSWNDPVQIKQLLDVGTQTLLVPMVQNADEAREAVRATRYPPAGIRGVGSALARASRWNRIPDYLQKANDQMCVLVQIETREAMKNLPQILDVEGVDGVFIGPADLSADMGYAGNPQHPEVQAAIEQAIVQIRESGKAPGILIANEQLAKRYLELGALFVAVGVDTTLLARAAEALAARFGAQATAVKPGVY.

The active-site Proton acceptor is histidine 45. Glutamine 147 contacts substrate. Glutamate 149 serves as a coordination point for a divalent metal cation. Substrate contacts are provided by alanine 174 and aspartate 175. Residue aspartate 175 participates in a divalent metal cation binding.

Belongs to the HpcH/HpaI aldolase family. As to quaternary structure, homohexamer; trimer of dimers. A divalent metal cation serves as cofactor.

The catalysed reaction is 4-hydroxy-2-oxoheptanedioate = succinate semialdehyde + pyruvate. It catalyses the reaction D-glyceraldehyde + 3-hydroxypyruvate = (3R,4S,5R)-3,4,5,6-tetrahydroxy-2-oxohexanoate. It carries out the reaction D-glyceraldehyde + 3-hydroxypyruvate = 2-dehydro-D-gluconate. The enzyme catalyses D-glyceraldehyde + 3-hydroxypyruvate = 2-dehydro-D-galactonate. The catalysed reaction is D-glyceraldehyde + pyruvate = 2-dehydro-3-deoxy-L-galactonate. It catalyses the reaction 2-dehydro-3-deoxy-D-gluconate = D-glyceraldehyde + pyruvate. Its pathway is aromatic compound metabolism; 4-hydroxyphenylacetate degradation; pyruvate and succinate semialdehyde from 4-hydroxyphenylacetate: step 7/7. Functionally, catalyzes the reversible retro-aldol cleavage of 4-hydroxy-2-ketoheptane-1,7-dioate (HKHD) to pyruvate and succinic semialdehyde. In vitro, can catalyze the aldolisation reaction between hydroxypyruvate (HPA) or pyruvate (PA) and D-glyceraldehyde (D-GA). The condensation of hydroxypyruvate and D-glyceraldehyde produces (3R,4S,5R)-3,4,5,6-tetrahydroxy-2-oxohexanoate as the major product, 2-dehydro-D-gluconate and 2-dehydro-D-galactonate. The condensation of pyruvate and D-glyceraldehyde produces 2-dehydro-3-deoxy-L-galactonate as the major product and 2-dehydro-3-deoxy-D-gluconate. This Escherichia coli (strain ATCC 8739 / DSM 1576 / NBRC 3972 / NCIMB 8545 / WDCM 00012 / Crooks) protein is 4-hydroxy-2-oxo-heptane-1,7-dioate aldolase.